A 1458-amino-acid chain; its full sequence is ATPase family AAA domain-containing protein 2B (1458 aa).

Residues 1–155 (MVNTRKSSLR…LRGEKKGDGD (155 aa)) are disordered. S16 is subject to Phosphoserine. Residues 23–33 (PGAGAEPGATG) show a composition bias toward gly residues. Residues 34–58 (GSSHFISSRTRSSKTRAASCPAAKA) show a composition bias toward low complexity. S79, S81, and S86 each carry phosphoserine. The span at 99–115 (VCKDKSKSRSTGQREEW) shows a compositional bias: basic and acidic residues. The span at 116–129 (NLSTGQARLTSQPG) shows a compositional bias: polar residues. The residue at position 140 (S140) is a Phosphoserine. T221 is subject to Phosphothreonine. A disordered region spans residues 244–286 (NSYGIQNHHEVSTEGEEEESQEEDGDIEVEEAEGEENDRPYNL). Over residues 256 to 279 (TEGEEEESQEEDGDIEVEEAEGEE) the composition is skewed to acidic residues. S318 is subject to Phosphoserine. The segment covering 321–332 (RRSHIRRKKHAI) has biased composition (basic residues). Residues 321 to 353 (RRSHIRRKKHAIHSSDTTSSDEERFERRKSKSM) form a disordered region. Residue 441–448 (GPPGTGKT) participates in ATP binding. S939 carries the phosphoserine modification. Residues 943–974 (QLSESEKSRMEDQEENTLRELRLFLRDVTKRL) are a coiled coil. A Bromo domain is found at 951-1066 (RMEDQEENTL…DTAHAIIAAE (116 aa)). Disordered stretches follow at residues 1189–1208 (DCHEENGEETGDLSMTNDES), 1217–1257 (QGQR…EQTS), and 1309–1330 (LLEDQSKEKPETSTENHGDDLE). The span at 1240 to 1252 (NESLLVNSSSSLN) shows a compositional bias: low complexity. 2 positions are modified to phosphoserine: S1338 and S1347.

The protein belongs to the AAA ATPase family. Binds acetylated lysine residues in histone H1.4, H2A, H2B, H3 and H4 (in vitro).

The protein localises to the nucleus. This chain is ATPase family AAA domain-containing protein 2B (ATAD2B), found in Homo sapiens (Human).